A 60-amino-acid chain; its full sequence is Chromatin protein Cren7 (60 aa).

This sequence belongs to the Cren7 family. In terms of assembly, monomer. Post-translationally, methylated at multiple sites, to varying extents.

It localises to the chromosome. Its subcellular location is the cytoplasm. In terms of biological role, a chromatin protein, binds double-stranded DNA without sequence specificity. Constrains negative DNA supercoils. The chain is Chromatin protein Cren7 from Saccharolobus islandicus (strain M.16.4 / Kamchatka #3) (Sulfolobus islandicus).